A 105-amino-acid polypeptide reads, in one-letter code: Protein SMALL AUXIN UP-REGULATED RNA 16 (105 aa).

Belongs to the ARG7 family. In terms of tissue distribution, expressed in etiolated hypocotyls, cotyledons, leaves, flowers and siliques.

It localises to the cell membrane. Its function is as follows. Provide a mechanistic link between auxin and plasma membrane H(+)-ATPases (PM H(+)-ATPases, e.g. AHA1 and AHA2), and triggers PM H(+)-ATPases activity by promoting phosphorylation of their C-terminal autoinhibitory domain as a result of PP2C-D subfamily of type 2C phosphatases inhibition, thus leading to the acidification of the apoplast and the facilitation of solutes and water uptake to drive cell expansion. Triggers plant growth probably by promoting cell elongation. Regulates branch angles and bending. This Arabidopsis thaliana (Mouse-ear cress) protein is Protein SMALL AUXIN UP-REGULATED RNA 16.